Here is a 115-residue protein sequence, read N- to C-terminus: Putative ethidium bromide resistance protein (115 aa).

4 consecutive transmembrane segments (helical) span residues 4–21, 30–47, 58–79, and 85–104; these read WLFL…TSAL, LAPS…FYFL, VAYA…WLLH, and AWGF…ARSP.

Belongs to the drug/metabolite transporter (DMT) superfamily. Small multidrug resistance (SMR) (TC 2.A.7.1) family.

The protein resides in the cell membrane. Functionally, one of the determinants for resistance to ethidium bromide and quaternary ammonium compounds. The chain is Putative ethidium bromide resistance protein (ebr) from Escherichia coli.